An 885-amino-acid chain; its full sequence is Alpha-actinin (885 aa).

Positions M1–H242 are actin-binding. 2 consecutive Calponin-homology (CH) domains span residues K26–A130 and M139–H245. Spectrin repeat units follow at residues L270–L377, H389–E494, E508–Q614, and L626–E727. 2 EF-hand domains span residues E741 to N776 and D780 to D815. 8 residues coordinate Ca(2+): D754, T758, R760, E765, D793, N795, T797, and Y799.

It belongs to the alpha-actinin family. As to quaternary structure, homodimer; antiparallel.

F-actin cross-linking protein which is thought to anchor actin to a variety of intracellular structures. This is a bundling protein. The chain is Alpha-actinin from Dermatophagoides farinae (American house dust mite).